Consider the following 553-residue polypeptide: MVYICIDTGSHAKGYAVESSDTDYHIYTKCDRETFEKFIDNKELLKNRHAKDESGNDVKYVDLYTGLIGILTGKSPELSMFSKREDFKDKYGIENLQLYEFVTKLMTVSMVKIIYTLMRYKILNNAKGLLQLMFNYVYVEYYLDYKRAPKSTKILNMLFNVGDEIKITMDKNNQLVVNDLNVLDLNKNNGGYKIDETLTLFVKNVKLLKLYVKLMQRGEYQQEWTEYFQQWKQQLQDRLHHVPEPPERTDIRHNIVMYALNERGPVMPEDENKIVYQIYPSVSHLDQGKKGTLADKEIIVQEKLDGCNFRIICNQNKITYGSRNTYRPDGNFMNYYRIRKDLETCMRSLQARFNDGFIVYGELMGWKDDAKTTPINVINYVDQKESLKYYAYEIQLYGGEFVPFVEAQELLTNVGFNTIPCHKYLYNDFVERLNFKSLMFPQSPLEGFIIRCGNLIYKLKSDYKDLNKLKIEKGPFEWLTCDYIKSNCDAIDKSDMMKILIFCYNMCKVKNYNEKLLFNKVFNLFRQQFNLNHNDYKNLYKQYVNMCKCTEYK.

The protein resides in the host cytoplasm. Functionally, may participate in the recruitment of G-actin to the host nucleus. The chain is Protein Early 65 kDa (HE65) from Autographa californica nuclear polyhedrosis virus (AcMNPV).